Reading from the N-terminus, the 131-residue chain is Large ribosomal subunit protein bL12 (131 aa).

It belongs to the bacterial ribosomal protein bL12 family. As to quaternary structure, homodimer. Part of the ribosomal stalk of the 50S ribosomal subunit. Forms a multimeric L10(L12)X complex, where L10 forms an elongated spine to which 2 to 4 L12 dimers bind in a sequential fashion. Binds GTP-bound translation factors.

Functionally, forms part of the ribosomal stalk which helps the ribosome interact with GTP-bound translation factors. Is thus essential for accurate translation. The polypeptide is Large ribosomal subunit protein bL12 (Parasynechococcus marenigrum (strain WH8102)).